The chain runs to 329 residues: MVRAKSWTLKKHFVGYPTPSNFELKTVELPPLKNGEVLLEALFLTVDPYMRIAARKLKEGDMMMGEQVARVIESKNAAFPTGTIVVALLGWTTHSISDGKNLERLLAEWPDTLPLSLTLGTVGMPGLTAYFGLLDICGLKGGETVMVNAAAGAVGSVVGQIAKLKGCKVVGAAGSDEKVACLKKYGFDVAFNYKTIESLEETLKKASPEGYDCYFDNVGGEFSNAVTSQMKKFGRIAICGAISTYNRTGPPPPGPPPEVVIYNELCFQGFIVTRWQGEVRQKALRDLLKWVSEGKIQYHEHITEGFENMPAAFMGMLKGENLGKAIVKA.

Thr18 bears the Phosphothreonine mark. The residue at position 20 (Ser20) is a Phosphoserine. NADP(+) contacts are provided by residues 152 to 155 (GAVG), Lys178, Tyr193, Asn217, 239 to 245 (CGAISTY), 270 to 272 (FIV), and Asn321. Lys178 is subject to N6-(2-hydroxyisobutyryl)lysine; alternate. Lys178 bears the N6-acetyllysine; alternate mark.

This sequence belongs to the NADP-dependent oxidoreductase L4BD family. As to quaternary structure, monomer or homodimer. Ubiquitously distributed in various tissues and leukocytes, the kidney and liver had the highest enzyme activities.

The protein localises to the cytoplasm. The enzyme catalyses 13,14-dihydro-15-oxo-prostaglandin E1 + NADP(+) = 15-oxoprostaglandin E1 + NADPH + H(+). The catalysed reaction is 13,14-dihydro-15-oxo-prostaglandin E2 + NADP(+) = 15-oxoprostaglandin E2 + NADPH + H(+). It catalyses the reaction 13,14-dihydro-15-oxo-prostaglandin E2 + NAD(+) = 15-oxoprostaglandin E2 + NADH + H(+). It carries out the reaction 13,14-dihydro-15-oxo-prostaglandin F1alpha + NADP(+) = 15-oxoprostaglandin F1alpha + NADPH + H(+). The enzyme catalyses 13,14-dihydro-15-oxo-PGF2alpha + NADP(+) = 15-oxoprostaglandin F2alpha + NADPH + H(+). The catalysed reaction is leukotriene B4 + NADP(+) = 12-oxo-leukotriene B4 + NADPH + H(+). It catalyses the reaction 20-hydroxy-leukotriene B4 + NADP(+) = 12-oxo-20-hydroxy-leukotriene B4 + NADPH + H(+). It carries out the reaction 6-trans-leukotriene B4 + NADP(+) = 12-oxo-(5S)-hydroxy-(6E,8E,10E,14Z)-eicosatetraenoate + NADPH + H(+). The enzyme catalyses (5S,12S)-dihydroxy-(6E,10E,12E,14Z)-eicosatetraenoate + NADP(+) = 12-oxo-(5S)-hydroxy-(6E,8E,10E,14Z)-eicosatetraenoate + NADPH + H(+). The catalysed reaction is 15-oxo-(5S,6R)-dihydroxy-(7E,9E,11Z,13E)-eicosatetraenoate + NADH + H(+) = 15-oxo-(5S,6R)-dihydroxy-(7E,9E,11Z)-eicosatrienoate + NAD(+). It catalyses the reaction an n-alkanal + NADP(+) = an alk-2-enal + NADPH + H(+). It carries out the reaction hexanal + NADP(+) = (E)-hex-2-enal + NADPH + H(+). The enzyme catalyses octanal + NADP(+) = (2E)-octenal + NADPH + H(+). The catalysed reaction is decanal + NADP(+) = (2E)-decenal + NADPH + H(+). It catalyses the reaction dodecanal + NADP(+) = (2E)-dodecenal + NADPH + H(+). It carries out the reaction 4-hydroxynonanal + NADP(+) = (E)-4-hydroxynon-2-enal + NADPH + H(+). The enzyme catalyses pentan-2-one + NADP(+) = (E)-pent-3-en-2-one + NADPH + H(+). The catalysed reaction is nonan-2-one + NADP(+) = (3E)-nonen-2-one + NADPH + H(+). With respect to regulation, down-regulated by nonsteroidal anti-inflammatory drugs diclofenac, indomethacin and niflumic acid. In terms of biological role, NAD(P)H-dependent oxidoreductase involved in metabolic inactivation of pro- and anti-inflammatory eicosanoids: prostaglandins (PG), leukotrienes (LT) and lipoxins (LX). Preferentially uses NADPH over NADH as cofactor. Catalyzes with high efficiency the reduction of the 13,14 double bond of 15-oxoPGs, including 15-oxo-PGE1, 15-oxo-PGE2, 15-oxo-PGF1-alpha and 15-oxo-PGF2-alpha. Catalyzes with lower efficiency the oxidation of the hydroxyl group at C12 of LTB4 and its derivatives, converting them into biologically less active 12-oxo-LTB4 metabolites. Reduces 15-oxo-LXA4 to 13,14 dihydro-15-oxo-LXA4 and may promote neutrophil recruitment at the inflammatory site. Plays a role in metabolic detoxification of alkenals and ketones. Reduces alpha,beta-unsaturated alkenals and ketones, particularly those with medium-chain length, showing highest affinity toward (2E)-decenal and (3E)-3-nonen-2-one. May inactivate 4-hydroxy-2-nonenal, a cytotoxic lipid constituent of oxidized low-density lipoprotein particles. The sequence is that of Prostaglandin reductase 1 (PTGR1) from Sus scrofa (Pig).